A 338-amino-acid chain; its full sequence is D-erythrose-4-phosphate dehydrogenase (338 aa).

12–13 (RI) contributes to the NAD(+) binding site. Substrate contacts are provided by residues 154-156 (SCT), Arg-200, 213-214 (TK), and Arg-236. Cys-155 serves as the catalytic Nucleophile. Asn-318 serves as a coordination point for NAD(+).

It belongs to the glyceraldehyde-3-phosphate dehydrogenase family. Epd subfamily. Homotetramer.

The protein localises to the cytoplasm. The catalysed reaction is D-erythrose 4-phosphate + NAD(+) + H2O = 4-phospho-D-erythronate + NADH + 2 H(+). It functions in the pathway cofactor biosynthesis; pyridoxine 5'-phosphate biosynthesis; pyridoxine 5'-phosphate from D-erythrose 4-phosphate: step 1/5. Catalyzes the NAD-dependent conversion of D-erythrose 4-phosphate to 4-phosphoerythronate. The chain is D-erythrose-4-phosphate dehydrogenase from Pectobacterium carotovorum subsp. carotovorum (strain PC1).